A 441-amino-acid polypeptide reads, in one-letter code: Xylose isomerase (441 aa).

Catalysis depends on residues H99 and D102. Mg(2+) contacts are provided by E230, E266, H269, D294, D305, D307, and D337.

This sequence belongs to the xylose isomerase family. In terms of assembly, homotetramer. Requires Mg(2+) as cofactor.

Its subcellular location is the cytoplasm. It carries out the reaction alpha-D-xylose = alpha-D-xylulofuranose. Its function is as follows. Exhibits xylose isomerase activity. The sequence is that of Xylose isomerase (xylA) from Bacillus sp. (strain LW2).